The following is a 225-amino-acid chain: Ribonuclease T (225 aa).

Residues M1–H21 are disordered. The 175-residue stretch at V33–F207 folds into the Exonuclease domain. D36, E38, H194, and D199 together coordinate Mg(2+). H194 serves as the catalytic Proton donor/acceptor.

Belongs to the RNase T family. In terms of assembly, homodimer. Requires Mg(2+) as cofactor.

Its function is as follows. Trims short 3' overhangs of a variety of RNA species, leaving a one or two nucleotide 3' overhang. Responsible for the end-turnover of tRNA: specifically removes the terminal AMP residue from uncharged tRNA (tRNA-C-C-A). Also appears to be involved in tRNA biosynthesis. This chain is Ribonuclease T, found in Pseudomonas savastanoi pv. phaseolicola (strain 1448A / Race 6) (Pseudomonas syringae pv. phaseolicola (strain 1448A / Race 6)).